A 351-amino-acid chain; its full sequence is Protein RecA (351 aa).

64–71 (GPESSGKT) serves as a coordination point for ATP. The tract at residues 330 to 351 (DRFLQNGGPDPDDGDGDATAEM) is disordered. The span at 339-351 (DPDDGDGDATAEM) shows a compositional bias: acidic residues.

Belongs to the RecA family.

It localises to the cytoplasm. Its function is as follows. Can catalyze the hydrolysis of ATP in the presence of single-stranded DNA, the ATP-dependent uptake of single-stranded DNA by duplex DNA, and the ATP-dependent hybridization of homologous single-stranded DNAs. It interacts with LexA causing its activation and leading to its autocatalytic cleavage. The polypeptide is Protein RecA (Rhizobium leguminosarum bv. viciae).